A 494-amino-acid polypeptide reads, in one-letter code: UPF0371 protein SPH_0451 (494 aa).

This sequence belongs to the UPF0371 family.

In Streptococcus pneumoniae (strain Hungary19A-6), this protein is UPF0371 protein SPH_0451.